A 344-amino-acid chain; its full sequence is Serine proteinase inhibitor 2 (344 aa).

This sequence belongs to the serpin family. Poxviruses subfamily.

The protein resides in the host cytoplasm. Its function is as follows. Viral serpin that inhibits both cysteine and serine proteinases involved in the regulation of host inflammatory and apoptosis processes. Major anti-apoptotic protein which inhibits both intrinsic and extrinsic pathways and strongly cleaves host CASP1 and CASP8 but is a rather poor inhibitor of host CASP3. Prevents the proteolytic activity of host interleukin-1-beta converting enzyme (ICE) and ICE-like enzymes. Can also block apoptosis through host tumor necrosis factor (TNF) receptor. The inhibition of host ICE is an example of a 'cross-class' interaction, in which a serpin inhibits a non-serine proteinase. Also inhibits granzyme B. This is Serine proteinase inhibitor 2 (OPG199) from Cynomys gunnisoni (Gunnison's prairie dog).